We begin with the raw amino-acid sequence, 61 residues long: Pleurocidin-like peptide WF3 (61 aa).

Positions 1–22 (MKFTATFLVLSLVVLMAEPGEC) are cleaved as a signal peptide. The propeptide occupies 48–61 (YDEQQELNKRAVDE).

This sequence belongs to the pleurocidin family.

Its subcellular location is the secreted. Functionally, antimicrobial peptide. The chain is Pleurocidin-like peptide WF3 (ple3) from Pseudopleuronectes americanus (Winter flounder).